Reading from the N-terminus, the 578-residue chain is Proteasome-associated ATPase (578 aa).

Positions 8-84 form a coiled coil; sequence TAAELRNQVR…LKEEVDRLAQ (77 aa). An ATP-binding site is contributed by 267–272; sequence GCGKTL. The interval 577–578 is docks into pockets in the proteasome alpha-ring; the sequence is YL.

Belongs to the AAA ATPase family. As to quaternary structure, homohexamer. Assembles into a hexameric ring structure that caps the 20S proteasome core. Strongly interacts with the prokaryotic ubiquitin-like protein Pup through a hydrophobic interface; the interacting region of ARC lies in its N-terminal coiled-coil domain. There is one Pup binding site per ARC hexamer ring. Upon ATP-binding, the C-terminus of ARC interacts with the alpha-rings of the proteasome core, possibly by binding to the intersubunit pockets.

Its pathway is protein degradation; proteasomal Pup-dependent pathway. ATPase which is responsible for recognizing, binding, unfolding and translocation of pupylated proteins into the bacterial 20S proteasome core particle. May be essential for opening the gate of the 20S proteasome via an interaction with its C-terminus, thereby allowing substrate entry and access to the site of proteolysis. Thus, the C-termini of the proteasomal ATPase may function like a 'key in a lock' to induce gate opening and therefore regulate proteolysis. The chain is Proteasome-associated ATPase from Kribbella flavida (strain DSM 17836 / JCM 10339 / NBRC 14399).